The sequence spans 109 residues: Large ribosomal subunit protein uL24 (109 aa).

Belongs to the universal ribosomal protein uL24 family. In terms of assembly, part of the 50S ribosomal subunit.

Functionally, one of two assembly initiator proteins, it binds directly to the 5'-end of the 23S rRNA, where it nucleates assembly of the 50S subunit. Its function is as follows. One of the proteins that surrounds the polypeptide exit tunnel on the outside of the subunit. This chain is Large ribosomal subunit protein uL24, found in Rickettsia africae (strain ESF-5).